A 334-amino-acid polypeptide reads, in one-letter code: GTP 3',8-cyclase (334 aa).

The 227-residue stretch at Arg-13 to Ala-239 folds into the Radical SAM core domain. Arg-22 is a binding site for GTP. Cys-29 and Cys-33 together coordinate [4Fe-4S] cluster. Tyr-35 provides a ligand contact to S-adenosyl-L-methionine. Position 36 (Cys-36) interacts with [4Fe-4S] cluster. Residue Arg-73 coordinates GTP. Gly-77 contacts S-adenosyl-L-methionine. Residue Thr-104 participates in GTP binding. Ser-128 lines the S-adenosyl-L-methionine pocket. Position 165 (Lys-165) interacts with GTP. Met-199 contacts S-adenosyl-L-methionine. Cys-262 and Cys-265 together coordinate [4Fe-4S] cluster. Residue Arg-267–Arg-269 coordinates GTP. Cys-279 is a [4Fe-4S] cluster binding site.

The protein belongs to the radical SAM superfamily. MoaA family. Monomer and homodimer. [4Fe-4S] cluster serves as cofactor.

The catalysed reaction is GTP + AH2 + S-adenosyl-L-methionine = (8S)-3',8-cyclo-7,8-dihydroguanosine 5'-triphosphate + 5'-deoxyadenosine + L-methionine + A + H(+). Its pathway is cofactor biosynthesis; molybdopterin biosynthesis. Its function is as follows. Catalyzes the cyclization of GTP to (8S)-3',8-cyclo-7,8-dihydroguanosine 5'-triphosphate. This chain is GTP 3',8-cyclase, found in Vibrio vulnificus (strain YJ016).